A 562-amino-acid chain; its full sequence is 2-succinyl-5-enolpyruvyl-6-hydroxy-3-cyclohexene-1-carboxylate synthase (562 aa).

This sequence belongs to the TPP enzyme family. MenD subfamily. Homodimer. Requires Mg(2+) as cofactor. It depends on Mn(2+) as a cofactor. The cofactor is thiamine diphosphate.

It catalyses the reaction isochorismate + 2-oxoglutarate + H(+) = 5-enolpyruvoyl-6-hydroxy-2-succinyl-cyclohex-3-ene-1-carboxylate + CO2. It functions in the pathway quinol/quinone metabolism; 1,4-dihydroxy-2-naphthoate biosynthesis; 1,4-dihydroxy-2-naphthoate from chorismate: step 2/7. The protein operates within cofactor biosynthesis; phylloquinone biosynthesis. Functionally, catalyzes the thiamine diphosphate-dependent decarboxylation of 2-oxoglutarate and the subsequent addition of the resulting succinic semialdehyde-thiamine pyrophosphate anion to isochorismate to yield 2-succinyl-5-enolpyruvyl-6-hydroxy-3-cyclohexene-1-carboxylate (SEPHCHC). This chain is 2-succinyl-5-enolpyruvyl-6-hydroxy-3-cyclohexene-1-carboxylate synthase, found in Thermosynechococcus vestitus (strain NIES-2133 / IAM M-273 / BP-1).